Here is a 327-residue protein sequence, read N- to C-terminus: Zinc transport protein ZntB (327 aa).

Topologically, residues 1-273 are cytoplasmic; that stretch reads MEAIKGSEVN…ARRTYTMSLM (273 aa). The chain crosses the membrane as a helical span at residues 274 to 294; that stretch reads AMVFLPSTFLTGLFGVNLGGI. At 295–300 the chain is on the periplasmic side; it reads PGGAWH. Residues 301–321 traverse the membrane as a helical segment; the sequence is FGFSMFCILLVVLIGGVTLWL. At 322 to 327 the chain is on the cytoplasmic side; the sequence is HRSKWL.

Belongs to the CorA metal ion transporter (MIT) (TC 1.A.35) family.

The protein resides in the cell inner membrane. The enzyme catalyses Zn(2+)(out) + H(+)(out) = Zn(2+)(in) + H(+)(in). Zinc transporter. Acts as a Zn(2+):proton symporter, which likely mediates zinc ion uptake. This Citrobacter koseri (strain ATCC BAA-895 / CDC 4225-83 / SGSC4696) protein is Zinc transport protein ZntB.